Here is a 244-residue protein sequence, read N- to C-terminus: tRNA pseudouridine synthase A (244 aa).

The Nucleophile role is filled by aspartate 52. Tyrosine 111 contributes to the substrate binding site.

It belongs to the tRNA pseudouridine synthase TruA family. In terms of assembly, homodimer.

The catalysed reaction is uridine(38/39/40) in tRNA = pseudouridine(38/39/40) in tRNA. Functionally, formation of pseudouridine at positions 38, 39 and 40 in the anticodon stem and loop of transfer RNAs. In Thermosipho africanus (strain TCF52B), this protein is tRNA pseudouridine synthase A.